We begin with the raw amino-acid sequence, 448 residues long: Histidine--tRNA ligase (448 aa).

It belongs to the class-II aminoacyl-tRNA synthetase family. As to quaternary structure, homodimer.

Its subcellular location is the cytoplasm. The enzyme catalyses tRNA(His) + L-histidine + ATP = L-histidyl-tRNA(His) + AMP + diphosphate + H(+). This Treponema denticola (strain ATCC 35405 / DSM 14222 / CIP 103919 / JCM 8153 / KCTC 15104) protein is Histidine--tRNA ligase.